The primary structure comprises 1720 residues: 182 kDa tankyrase-1-binding protein (1720 aa).

The disordered stretch occupies residues 1–137 (MKGSTLREGT…PPLTPPARCA (137 aa)). S14 carries the post-translational modification Phosphoserine. A compositionally biased stretch (basic and acidic residues) spans 117–127 (SGKEDAGKEDL). The residue at position 131 (T131) is a Phosphothreonine. Phosphoserine is present on residues S178 and S220. Disordered regions lie at residues 185 to 472 (SRLT…ESNW) and 485 to 595 (RPSG…EDQE). Residues 209–1563 (EEDSKSPAKG…TEILDSAMYR (1355 aa)) form an acidic region. Positions 232–243 (QEEHSKTPEERN) are enriched in basic and acidic residues. T238 carries the phosphothreonine modification. Over residues 266–287 (VSKTWVTSSADPVSEHGGSTSA) the composition is skewed to polar residues. A phosphoserine mark is found at S286 and S300. The span at 296–316 (PASESPRLSSRPSSPCHSQLS) shows a compositional bias: low complexity. Over residues 317-327 (ETQSPAASEAS) the composition is skewed to polar residues. Phosphoserine occurs at positions 429 and 437. A compositionally biased stretch (polar residues) spans 449 to 459 (TLPQGQGSQSA). Residues S496 and S500 each carry the phosphoserine modification. Over residues 502–518 (ITEASEAAEAAEADSWA) the composition is skewed to low complexity. A phosphothreonine mark is found at T503 and T533. A phosphoserine mark is found at S539, S568, S602, S673, S692, and S713. 3 disordered regions span residues 659 to 720 (TTLP…CSEG), 734 to 924 (GVAT…EFEK), and 955 to 1081 (SGGG…GWAG). The segment covering 742-758 (SSFGSSSWSQDTSQNYS) has biased composition (low complexity). 14 positions are modified to phosphoserine: S763, S796, S807, S845, S866, S871, S876, S887, S912, S976, S980, S1006, S1017, and S1022. A compositionally biased stretch (basic and acidic residues) spans 840–866 (FGKRESQDPHSIHDKELQDQEFGKRDS). The segment covering 991–1014 (FEKKTPVGEDRFCEASRDVGHLEE) has biased composition (basic and acidic residues). Residues 1027–1039 (HSRDGAARPKDEG) are compositionally biased toward basic and acidic residues. 10 positions are modified to phosphoserine: S1047, S1063, S1084, S1096, S1126, S1131, S1171, S1212, S1241, and S1246. A disordered region spans residues 1128–1153 (AGLSPSRKSGGGHFVPPGETKAGAVD). A disordered region spans residues 1198 to 1255 (LARRLGTGESEEPRSLGVGEKDWTSSVEARNRDLPGQAEVGRHSQARESGVGEPDWSG). The segment covering 1208-1230 (EEPRSLGVGEKDWTSSVEARNRD) has biased composition (basic and acidic residues). T1275 is modified (phosphothreonine). S1290, S1321, S1324, S1373, and S1375 each carry phosphoserine. The tract at residues 1358–1546 (GRVGPDLELD…RGLLPSCPSE (189 aa)) is disordered. A compositionally biased stretch (polar residues) spans 1402-1411 (EDSSSPSFET). A phosphoserine mark is found at S1425, S1429, S1437, S1440, S1442, S1463, and S1466. Residues 1428–1457 (ASPSSCLTRSPPSGSQSLLEGIMTASSSKG) show a composition bias toward polar residues. The segment at 1440 to 1532 (SGSQSLLEGI…QNEQASAPPP (93 aa)) is tankyrase-binding. Residues 1477–1489 (LAAGAGQGEPQEP) show a composition bias toward low complexity. S1496 is modified (phosphoserine). Over residues 1515–1527 (WSLTGAARQNEQA) the composition is skewed to polar residues. S1549 is subject to Phosphoserine. Residue T1554 is modified to Phosphothreonine. Residues 1567–1720 (NLGRKRGHRA…QALKLKKKKI (154 aa)) form a disordered region. Residues 1568-1577 (LGRKRGHRAP) show a composition bias toward basic residues. Residues 1593-1606 (SDTRLFQDSTEPRA) show a composition bias toward basic and acidic residues. Residues S1611, S1612, and S1622 each carry the phosphoserine modification. Positions 1620 to 1626 (PQSRRTR) match the Nuclear localization signal motif. K1635 is subject to N6-methyllysine. Phosphoserine is present on residues S1643 and S1657. The segment covering 1656-1670 (RSAEEGEVTESKSSQ) has biased composition (basic and acidic residues). A compositionally biased stretch (low complexity) spans 1671–1690 (KESSVQRSKSCKVPGLGKPL). A Phosphoserine modification is found at S1706. The Nuclear localization signal signature appears at 1714 to 1719 (KLKKKK).

As to quaternary structure, binds to the ANK repeat domain of TNKS1 and TNKS2. In terms of processing, ADP-ribosylated by TNKS1.

It localises to the nucleus. It is found in the cytoplasm. The protein resides in the cytoskeleton. The protein localises to the chromosome. This Mus musculus (Mouse) protein is 182 kDa tankyrase-1-binding protein (Tnks1bp1).